The sequence spans 496 residues: Glycine receptor subunit beta (496 aa).

The N-terminal stretch at 1 to 22 (MKFSLAISFFILMSLLFEDACA) is a signal peptide. The Extracellular portion of the chain corresponds to 23-268 (KEKSSKKGKG…IFTLRRQVGF (246 aa)). The disordered stretch occupies residues 32–53 (GKKKQYLCPSQQSPEDLARVPP). The N-linked (GlcNAc...) asparagine glycan is linked to N54. Glycine-binding residues include R108 and S174. A disulfide bridge links C183 with C197. A glycan (N-linked (GlcNAc...) asparagine) is linked at N242. The cysteines at positions 243 and 255 are disulfide-linked. T250 contacts glycine. A helical transmembrane segment spans residues 269-289 (YMMGVYAPTLLIVVLSWLSFW). Residues 290 to 294 (INPDA) are Cytoplasmic-facing. A helical transmembrane segment spans residues 295–315 (SAARVPLGIFSVLSLASECTT). The Extracellular segment spans residues 316–327 (LAAELPKVSYVK). The chain crosses the membrane as a helical span at residues 328–349 (ALDVWLIACLLFGFASLVEYAV). Residues 350–471 (VQVMLNNPKR…KPVIPTAAKR (122 aa)) are Cytoplasmic-facing. Position 391 is a phosphothreonine (T391). A helical membrane pass occupies residues 472-495 (IDLYARALFPFCFLFFNVIYWSIY). L496 is a topological domain (extracellular).

The protein belongs to the ligand-gated ion channel (TC 1.A.9) family. Glycine receptor (TC 1.A.9.3) subfamily. GLRB sub-subfamily. In terms of assembly, forms heteropentamers with glycin receptor alpha subunits. Heteropentamers with GLRA1 can be composed of two GLRA1 and three GLRB subunits, or three GLRA1 and two GLRB subunits, or four GLRA1 subunits and one GLRB subunit. Forms heteropentamers with GLRA2. Functional GLRB-GLRA2 heteropentamers contain four GLRA2 subunits and one GLRB subunit, although alternative subunit composition cannot be excluded. Forms a heteropentamer with GLRA3. Interacts with GPHN. Detected in spinal cord, brain and brain stem, especially in the periolivary region, spinal nuclei, trigeminal nucleus, medulla oblongata, pons and midbrain. Detected in the inner plexiform layer of the retina (at protein level). High levels of expression in cortex, hippocampus, thalamus and cerebellum. Detected in spinal cord.

The protein localises to the postsynaptic cell membrane. It localises to the synapse. The protein resides in the cell projection. It is found in the dendrite. Its subcellular location is the cell membrane. The protein localises to the cytoplasm. The catalysed reaction is chloride(in) = chloride(out). With respect to regulation, channel opening is triggered by extracellular glycine. Heteropentameric channels composed of GLRB and GLRA1 are activated by lower glycine levels than homopentameric GLRA1. Its function is as follows. Subunit of heteromeric glycine-gated chloride channels. Plays an important role in the down-regulation of neuronal excitability. Contributes to the generation of inhibitory postsynaptic currents. The chain is Glycine receptor subunit beta (Glrb) from Mus musculus (Mouse).